Here is a 356-residue protein sequence, read N- to C-terminus: Heat-inducible transcription repressor HrcA (356 aa).

It belongs to the HrcA family.

Negative regulator of class I heat shock genes (grpE-dnaK-dnaJ and groELS operons). Prevents heat-shock induction of these operons. The sequence is that of Heat-inducible transcription repressor HrcA from Brucella abortus (strain S19).